We begin with the raw amino-acid sequence, 505 residues long: Putative pentatricopeptide repeat-containing protein At1g26500 (505 aa).

PPR repeat units lie at residues 145 to 179 (NDKTFRIVLKTLASARELKKCVNYFHLMNGFGYLY), 180 to 210 (NVETMNRGVETLCKEKLVEEAKFVFIKLKEF), 214 to 248 (DEITYRTMIQGFCDVGDLIEAAKLWNLMMDEGFDV), 249 to 279 (DIEAGKKIMETLLKKNQFDEASKVFYVMVSK), 285 to 319 (DGGFYRVMIDWLCKNGRIDMARKVFDEMRERGVYV), 320 to 350 (DNLTWASLIYGLLVKRRVVEAYGLVEGVENP), and 351 to 385 (DISIYHGLIKGLVKIKRASEATEVFRKMIQRGCEP).

Belongs to the PPR family. P subfamily.

The protein is Putative pentatricopeptide repeat-containing protein At1g26500 of Arabidopsis thaliana (Mouse-ear cress).